A 503-amino-acid chain; its full sequence is Cytochrome P450 6l1 (503 aa).

Heme is bound at residue Cys438.

Belongs to the cytochrome P450 family. Heme is required as a cofactor. As to expression, detected only in testes and accessory glands of male adults.

It is found in the endoplasmic reticulum membrane. The protein localises to the microsome membrane. This is Cytochrome P450 6l1 (CYP6L1) from Blattella germanica (German cockroach).